Reading from the N-terminus, the 424-residue chain is 3-oxo-tetronate kinase (424 aa).

ATP-binding positions include Ser-264, 363–366 (GGET), and Gly-408.

It belongs to the four-carbon acid sugar kinase family.

It catalyses the reaction 3-dehydro-L-erythronate + ATP = 3-dehydro-4-O-phospho-L-erythronate + ADP + H(+). The catalysed reaction is 3-dehydro-D-erythronate + ATP = 3-dehydro-4-O-phospho-D-erythronate + ADP + H(+). Catalyzes the ATP-dependent phosphorylation of 3-oxo-tetronate to 3-oxo-tetronate 4-phosphate. The chain is 3-oxo-tetronate kinase from Methylobacterium radiotolerans (strain ATCC 27329 / DSM 1819 / JCM 2831 / NBRC 15690 / NCIMB 10815 / 0-1).